Consider the following 889-residue polypeptide: Alanine--tRNA ligase (889 aa).

Zn(2+)-binding residues include H574, H578, C682, and H686.

Belongs to the class-II aminoacyl-tRNA synthetase family. Requires Zn(2+) as cofactor.

It localises to the cytoplasm. It catalyses the reaction tRNA(Ala) + L-alanine + ATP = L-alanyl-tRNA(Ala) + AMP + diphosphate. Functionally, catalyzes the attachment of alanine to tRNA(Ala) in a two-step reaction: alanine is first activated by ATP to form Ala-AMP and then transferred to the acceptor end of tRNA(Ala). Also edits incorrectly charged Ser-tRNA(Ala) and Gly-tRNA(Ala) via its editing domain. In Orientia tsutsugamushi (strain Ikeda) (Rickettsia tsutsugamushi), this protein is Alanine--tRNA ligase.